The sequence spans 433 residues: L-2-hydroxyglutarate dehydrogenase, mitochondrial (433 aa).

Belongs to the L2HGDH family. Requires FAD as cofactor.

It localises to the mitochondrion. The catalysed reaction is (S)-2-hydroxyglutarate + A = 2-oxoglutarate + AH2. The chain is L-2-hydroxyglutarate dehydrogenase, mitochondrial from Caenorhabditis elegans.